A 117-amino-acid chain; its full sequence is DNA-directed RNA polymerase subunit omega (117 aa).

Over residues 96–105 (KEEAEEEAKQ) the composition is skewed to basic and acidic residues. Residues 96–117 (KEEAEEEAKQKNSRAAKAAAAE) form a disordered region. Residues 108-117 (SRAAKAAAAE) are compositionally biased toward low complexity.

The protein belongs to the RNA polymerase subunit omega family. As to quaternary structure, the RNAP catalytic core consists of 2 alpha, 1 beta, 1 beta' and 1 omega subunit. When a sigma factor is associated with the core the holoenzyme is formed, which can initiate transcription.

It catalyses the reaction RNA(n) + a ribonucleoside 5'-triphosphate = RNA(n+1) + diphosphate. Its function is as follows. Promotes RNA polymerase assembly. Latches the N- and C-terminal regions of the beta' subunit thereby facilitating its interaction with the beta and alpha subunits. This is DNA-directed RNA polymerase subunit omega (rpoZ) from Lactococcus lactis subsp. lactis (strain IL1403) (Streptococcus lactis).